A 120-amino-acid polypeptide reads, in one-letter code: VQLQQSGAELVRAGSSVKMSCKASGYTFTSYGINWVKQRPGQGLEWIGYINPGNGYTKYNEKFKGKTTLTVDKSSSTAYMQLRSLTSEDSAVYFCARSVYYGGSYYFDYWGQGTTLTVSS.

An Ig-like domain is found at 1-111 (VQLQQSGAEL…GGSYYFDYWG (111 aa)).

This Mus musculus (Mouse) protein is Ig heavy chain V region 36-65.